A 504-amino-acid chain; its full sequence is Probable phenylalanine--tRNA ligase beta subunit (504 aa).

The B5 domain occupies 270–346 (IKDKSYLLSI…ICYGFNNINM (77 aa)). 4 residues coordinate Mg(2+): aspartate 324, aspartate 330, glutamate 333, and aspartate 334.

It belongs to the phenylalanyl-tRNA synthetase beta subunit family. Type 2 subfamily. Tetramer of two alpha and two beta subunits. It depends on Mg(2+) as a cofactor.

The protein localises to the cytoplasm. It carries out the reaction tRNA(Phe) + L-phenylalanine + ATP = L-phenylalanyl-tRNA(Phe) + AMP + diphosphate + H(+). The protein is Probable phenylalanine--tRNA ligase beta subunit of Vairimorpha ceranae (strain BRL01) (Microsporidian parasite).